The following is a 621-amino-acid chain: Auxin response factor 13 (621 aa).

The TF-B3 DNA-binding region spans 124-228 (FSKILTASDV…ELRFGIRRAK (105 aa)). A PB1 domain is found at 508–600 (RSRIKVHMQG…EIKKMKLKNK (93 aa)).

This sequence belongs to the ARF family. In terms of assembly, homodimers and heterodimers.

The protein localises to the nucleus. In terms of biological role, auxin response factors (ARFs) are transcriptional factors that bind specifically to the DNA sequence 5'-TGTCTC-3' found in the auxin-responsive promoter elements (AuxREs). Could act as transcriptional activator or repressor. Formation of heterodimers with Aux/IAA proteins may alter their ability to modulate early auxin response genes expression. In Arabidopsis thaliana (Mouse-ear cress), this protein is Auxin response factor 13 (ARF13).